A 252-amino-acid chain; its full sequence is ATP synthase subunit a (252 aa).

Helical transmembrane passes span 6-26, 31-51, 88-108, 117-137, 144-164, 190-212, and 225-245; these read LEQF…YFSF, LFML…TLNG, FFPL…IGMI, HFII…IVGF, FFSI…LVLL, LVKI…YLGQ, and LELG…CIYL.

This sequence belongs to the ATPase A chain family. F-type ATPases have 2 components, CF(1) - the catalytic core - and CF(0) - the membrane proton channel. CF(1) has five subunits: alpha(3), beta(3), gamma(1), delta(1), epsilon(1). CF(0) has three main subunits: a, b and c.

Its subcellular location is the mitochondrion inner membrane. Mitochondrial membrane ATP synthase (F(1)F(0) ATP synthase or Complex V) produces ATP from ADP in the presence of a proton gradient across the membrane which is generated by electron transport complexes of the respiratory chain. F-type ATPases consist of two structural domains, F(1) - containing the extramembraneous catalytic core and F(0) - containing the membrane proton channel, linked together by a central stalk and a peripheral stalk. During catalysis, ATP synthesis in the catalytic domain of F(1) is coupled via a rotary mechanism of the central stalk subunits to proton translocation. Key component of the proton channel; it may play a direct role in the translocation of protons across the membrane. This is ATP synthase subunit a (ATP6) from Marchantia polymorpha (Common liverwort).